Consider the following 304-residue polypeptide: Olfactory receptor 8G2 (304 aa).

Residues 1–41 (MVFLSSVETDQRKMSAGNHSSVTEFILAGLSEQPELQLRLF) lie on the Extracellular side of the membrane. N18 carries an N-linked (GlcNAc...) asparagine glycan. Residues 42–62 (LLFLGIYVVTVVGNLSMITLI) form a helical membrane-spanning segment. Residues 63–69 (GLSSHLH) lie on the Cytoplasmic side of the membrane. The helical transmembrane segment at 70 to 90 (TPMYYFLSGLSFIDLCHSTII) threads the bilayer. Residues 91 to 110 (TPKMLVNFVTEKNIISYPEC) lie on the Extracellular side of the membrane. C110 and C192 are oxidised to a cystine. A helical membrane pass occupies residues 111 to 130 (MTQLYFFLIFAIAECHMLAV). Topologically, residues 131 to 154 (TAYDRYVAICSPLLYNVIMSYHHC) are cytoplasmic. A helical transmembrane segment spans residues 155-175 (FWLTVGVYVLGILGSTIHTGF). Residues 176 to 193 (MLRLFLCKTNVINHYFCD) lie on the Extracellular side of the membrane. A helical membrane pass occupies residues 194–214 (LFPLLGLSCSSTYINELLVLV). The Cytoplasmic portion of the chain corresponds to 215–217 (LSA). A helical transmembrane segment spans residues 218 to 238 (FNILTPALTILASYIFIIASI). Residues 239-257 (LRIRSTEGRSKAFSTCSSH) lie on the Extracellular side of the membrane. The chain crosses the membrane as a helical span at residues 258–278 (ILAVAVFFGSAAFMYLQPSSV). Over 279–304 (SSMDQRKVSSVFYTTIVPMLNPQSIA) the chain is Cytoplasmic.

The protein belongs to the G-protein coupled receptor 1 family.

It localises to the cell membrane. Functionally, odorant receptor. In Homo sapiens (Human), this protein is Olfactory receptor 8G2.